A 427-amino-acid chain; its full sequence is Enolase (427 aa).

(2R)-2-phosphoglycerate is bound at residue glutamine 163. The active-site Proton donor is the glutamate 205. Mg(2+) is bound by residues aspartate 242, glutamate 285, and aspartate 312. (2R)-2-phosphoglycerate-binding residues include lysine 337, arginine 366, serine 367, and lysine 388. The Proton acceptor role is filled by lysine 337.

It belongs to the enolase family. The cofactor is Mg(2+).

It is found in the cytoplasm. Its subcellular location is the secreted. It localises to the cell surface. The catalysed reaction is (2R)-2-phosphoglycerate = phosphoenolpyruvate + H2O. It participates in carbohydrate degradation; glycolysis; pyruvate from D-glyceraldehyde 3-phosphate: step 4/5. Catalyzes the reversible conversion of 2-phosphoglycerate (2-PG) into phosphoenolpyruvate (PEP). It is essential for the degradation of carbohydrates via glycolysis. The sequence is that of Enolase from Bradyrhizobium diazoefficiens (strain JCM 10833 / BCRC 13528 / IAM 13628 / NBRC 14792 / USDA 110).